The sequence spans 518 residues: Forkhead box protein H1 (518 aa).

A disordered region spans residues 72-113; that stretch reads GSMYGLSPGTHEGSCTHTHEGPKDSMAGDQTRSRKSKKKNYH. Residues 104 to 113 show a composition bias toward basic residues; the sequence is SRKSKKKNYH. A DNA-binding region (fork-head) is located at residues 117–213; that stretch reads KPPYSYLAMI…MKLQNTALTR (97 aa). The tract at residues 318-397 is disordered; it reads KPTRNARSPG…NYSPIEPPKK (80 aa). Low complexity predominate over residues 329–346; the sequence is STIHSTYSSSSSSISTIS. An SMAD-interaction domain (SID) region spans residues 380–506; sequence TSSDPDTGNY…PSFLSQCLGS (127 aa). Positions 405–409 match the Fast/FoxH1 motif 1 (FM1) motif; the sequence is LPTSY. The Fast/FoxH1 motif 2 (FM2) signature appears at 415–421; the sequence is PNVVAPP. The SMAD interaction motif (SIM) signature appears at 470 to 491; that stretch reads LDNMLRAMPPNKSVFDVLTSHP.

As to quaternary structure, ARF1 contains 2 smad2s, 1 smad4 and 1 foxh1/fast-1 protein. Interaction with smad4 is most likely indirect through interaction with the MH2 domain of smad2. Binds to the MH2 domain of smad3, which can incorporate into the ARF1 complex. The ARF1 and ARF2 complexes are activated by distinct TGF-beta family members; formation of ARF1 is promoted by activin. Interacts (via Fork-head domain) with gtf2ird1/wbscr11 (via repeats 4-5). Highly expressed in the animal cap (prospective ectoderm) and prospective mesoderm of stage 10.25 embryos.

The protein localises to the nucleus. Transcriptional activator. Recognizes and binds to the DNA sequence 5'-TGT[GT][GT]ATT-3'. Upon TGF-beta induction, forms a transcriptionally active complex with smad2 and smad4 called activin-responsive factor 1 (ARF1), which binds a site on the mix-B/mix.2 promoter called the activin response element (ARE). Binds to activated smads and the ARE with much lower affinity than fast3. Necessary for the first steps in mesoderm specification, directly inducing mesodermal genes. Acts with fast3 to control the convergent extension movements of gastrulation. Binds to the proximal element (PE) of the gsc gene and cooperates with gtf2ird1/wbscr11 and SMAD proteins to regulate gsc transcription. The polypeptide is Forkhead box protein H1 (foxh1) (Xenopus laevis (African clawed frog)).